The chain runs to 393 residues: Argininosuccinate synthase (393 aa).

ATP is bound by residues 7-15 and Ala34; that span reads AYSGGLDTS. L-citrulline contacts are provided by Tyr85 and Ser90. Gly115 serves as a coordination point for ATP. Thr117, Asn121, and Asp122 together coordinate L-aspartate. L-citrulline is bound at residue Asn121. Arg125, Ser176, Ser185, Glu261, and Tyr273 together coordinate L-citrulline.

This sequence belongs to the argininosuccinate synthase family. Type 1 subfamily. Homotetramer.

The protein resides in the cytoplasm. It carries out the reaction L-citrulline + L-aspartate + ATP = 2-(N(omega)-L-arginino)succinate + AMP + diphosphate + H(+). The protein operates within amino-acid biosynthesis; L-arginine biosynthesis; L-arginine from L-ornithine and carbamoyl phosphate: step 2/3. The chain is Argininosuccinate synthase from Ehrlichia chaffeensis (strain ATCC CRL-10679 / Arkansas).